Here is an 860-residue protein sequence, read N- to C-terminus: Leucine--tRNA ligase (860 aa).

A 'HIGH' region motif is present at residues 42-52 (PYPSGRLHMGH). A 'KMSKS' region motif is present at residues 619–623 (KMSKS). Residue lysine 622 coordinates ATP.

It belongs to the class-I aminoacyl-tRNA synthetase family.

Its subcellular location is the cytoplasm. The catalysed reaction is tRNA(Leu) + L-leucine + ATP = L-leucyl-tRNA(Leu) + AMP + diphosphate. This is Leucine--tRNA ligase from Erwinia tasmaniensis (strain DSM 17950 / CFBP 7177 / CIP 109463 / NCPPB 4357 / Et1/99).